We begin with the raw amino-acid sequence, 592 residues long: Methionine--tRNA ligase (592 aa).

The 'HIGH' region motif lies at 12–22; the sequence is PYANGPFHVGH. Zn(2+) is bound by residues Cys144, Cys147, Cys157, and Cys160. A 'KMSKS' region motif is present at residues 342 to 346; sequence KMSTS. Thr345 provides a ligand contact to ATP.

Belongs to the class-I aminoacyl-tRNA synthetase family. MetG type 1 subfamily. Monomer. Zn(2+) serves as cofactor.

The protein resides in the cytoplasm. The catalysed reaction is tRNA(Met) + L-methionine + ATP = L-methionyl-tRNA(Met) + AMP + diphosphate. Functionally, is required not only for elongation of protein synthesis but also for the initiation of all mRNA translation through initiator tRNA(fMet) aminoacylation. This is Methionine--tRNA ligase from Roseiflexus castenholzii (strain DSM 13941 / HLO8).